The primary structure comprises 102 residues: 10 kDa heat shock protein, mitochondrial (102 aa).

Ala2 bears the N-acetylalanine mark. N6-acetyllysine is present on Lys8. The residue at position 28 (Lys28) is an N6-succinyllysine. N6-acetyllysine; alternate is present on Lys40. An N6-malonyllysine; alternate mark is found at Lys40, Lys54, and Lys56. N6-succinyllysine; alternate is present on residues Lys40, Lys54, and Lys56. Lys56 is modified (N6-acetyllysine; alternate). Residue Ser57 is modified to Phosphoserine. 2 positions are modified to N6-acetyllysine; alternate: Lys66 and Lys70. 2 positions are modified to N6-succinyllysine; alternate: Lys66 and Lys70. Thr79 is subject to Phosphothreonine. An N6-acetyllysine; alternate mark is found at Lys80 and Lys86. N6-succinyllysine; alternate is present on residues Lys80 and Lys86. Lys99 carries the post-translational modification N6-acetyllysine.

It belongs to the GroES chaperonin family. In terms of assembly, homoheptamer arranged in a ring structure. 2 heptameric Hsp10 rings interact with a Hsp60 tetradecamer in the structure of a back-to-back double heptameric ring to form the symmetrical football complex.

The protein localises to the mitochondrion matrix. Co-chaperonin implicated in mitochondrial protein import and macromolecular assembly. Together with Hsp60, facilitates the correct folding of imported proteins. May also prevent misfolding and promote the refolding and proper assembly of unfolded polypeptides generated under stress conditions in the mitochondrial matrix. The functional units of these chaperonins consist of heptameric rings of the large subunit Hsp60, which function as a back-to-back double ring. In a cyclic reaction, Hsp60 ring complexes bind one unfolded substrate protein per ring, followed by the binding of ATP and association with 2 heptameric rings of the co-chaperonin Hsp10. This leads to sequestration of the substrate protein in the inner cavity of Hsp60 where, for a certain period of time, it can fold undisturbed by other cell components. Synchronous hydrolysis of ATP in all Hsp60 subunits results in the dissociation of the chaperonin rings and the release of ADP and the folded substrate protein. The polypeptide is 10 kDa heat shock protein, mitochondrial (Hspe1) (Mus musculus (Mouse)).